A 228-amino-acid polypeptide reads, in one-letter code: Calcyclin-binding protein (228 aa).

Residue alanine 2 is modified to N-acetylalanine. The interaction with SIAH1 stretch occupies residues 2-80 (ASEELQKDLE…YTVKISNYGW (79 aa)). The residue at position 3 (serine 3) is a Phosphoserine. Lysine 8 and lysine 19 each carry N6-acetyllysine. Serine 34 carries the phosphoserine modification. The CS domain maps to 73 to 167 (VKISNYGWDQ…VENTRWDYLT (95 aa)). Residues 73-228 (VKISNYGWDQ…EKQAKGDTEF (156 aa)) form an interaction with SKP1 region. An N6-acetyllysine mark is found at lysine 85 and lysine 118. The tract at residues 154 to 228 (CRKKVENTRW…EKQAKGDTEF (75 aa)) is interaction with S100A6. Positions 168 to 228 (QVEKECKEKE…EKQAKGDTEF (61 aa)) constitute an SGS domain.

Component of some large E3 complex at least composed of UBE2D1, SIAH1, CACYBP/SIP, SKP1, APC and TBL1X. Interacts directly with SIAH1, SIAH2 and SKP1. Interacts with protein of the S100 family S100A1, S100A6, S100B, S100P and S100A12 in a calcium-dependent manner. In terms of processing, phosphorylated on serine residues. Phosphorylated upon induction by RA or at high calcium concentrations.

It localises to the nucleus. The protein resides in the cytoplasm. Functionally, may be involved in calcium-dependent ubiquitination and subsequent proteasomal degradation of target proteins. Probably serves as a molecular bridge in ubiquitin E3 complexes. Participates in the ubiquitin-mediated degradation of beta-catenin (CTNNB1). This chain is Calcyclin-binding protein (CACYBP), found in Macaca fascicularis (Crab-eating macaque).